A 289-amino-acid polypeptide reads, in one-letter code: Protease HtpX (289 aa).

A run of 2 helical transmembrane segments spans residues 4-24 and 36-56; these read IMLF…VLNI and LSGL…ISLM. His143 contributes to the Zn(2+) binding site. Glu144 is an active-site residue. His147 lines the Zn(2+) pocket. Transmembrane regions (helical) follow at residues 158–178 and 192–212; these read LMQG…ANIV and MVYF…ASFL. A Zn(2+)-binding site is contributed by Glu221.

It belongs to the peptidase M48B family. It depends on Zn(2+) as a cofactor.

Its subcellular location is the cell inner membrane. The protein is Protease HtpX of Vibrio campbellii (strain ATCC BAA-1116).